A 495-amino-acid chain; its full sequence is Ubiquinone biosynthesis monooxygenase COQ6, mitochondrial (495 aa).

The protein belongs to the UbiH/COQ6 family. In terms of assembly, component of a multi-subunit COQ enzyme complex. The cofactor is FAD.

The protein localises to the mitochondrion inner membrane. It catalyses the reaction a 4-hydroxy-3-(all-trans-polyprenyl)benzoate + 2 reduced [2Fe-2S]-[ferredoxin] + O2 + 2 H(+) = a 3,4-dihydroxy-5-(all-trans-polyprenyl)benzoate + 2 oxidized [2Fe-2S]-[ferredoxin] + H2O. The catalysed reaction is a 2-methoxy-6-(all-trans-polyprenyl)phenol + 2 reduced [2Fe-2S]-[ferredoxin] + O2 + 2 H(+) = a 2-methoxy-6-(all-trans-polyprenyl)benzene-1,4-diol + 2 oxidized [2Fe-2S]-[ferredoxin] + H2O. Its pathway is cofactor biosynthesis; ubiquinone biosynthesis. Its function is as follows. FAD-dependent monooxygenase required for two non-consecutive steps during ubiquinone biosynthesis. Required for the C5-ring hydroxylation during ubiquinone biosynthesis by catalyzing the hydroxylation of 4-hydroxy-3-(all-trans-polyprenyl)benzoic acid to 3,4-dihydroxy-5-(all-trans-polyprenyl)benzoic acid. Also acts downstream of coq4, for the C1-hydroxylation during ubiquinone biosynthesis by catalyzing the hydroxylation of 2-methoxy-6-(all-trans-polyprenyl)phenol to 2-methoxy-6-(all-trans-polyprenyl)benzene-1,4-diol. The electrons required for the hydroxylation reaction are funneled indirectly to coq6 from NADPH via a ferredoxin/ferredoxin reductase system. The protein is Ubiquinone biosynthesis monooxygenase COQ6, mitochondrial of Dictyostelium discoideum (Social amoeba).